Reading from the N-terminus, the 999-residue chain is Transcription-repair-coupling factor (999 aa).

One can recognise a Helicase ATP-binding domain in the interval 499–656; the sequence is DLSSHRVMDR…LSQIKGISSL (158 aa). 512–519 contacts ATP; it reads GDVGFGKT. The DEEH box motif lies at 609–612; it reads DEEH. A Helicase C-terminal domain is found at 677-833; sequence LLKEIIYREL…SVAYHDLEIR (157 aa).

It in the N-terminal section; belongs to the UvrB family. In the C-terminal section; belongs to the helicase family. RecG subfamily.

The protein localises to the cytoplasm. In terms of biological role, couples transcription and DNA repair by recognizing RNA polymerase (RNAP) stalled at DNA lesions. Mediates ATP-dependent release of RNAP and its truncated transcript from the DNA, and recruitment of nucleotide excision repair machinery to the damaged site. The polypeptide is Transcription-repair-coupling factor (Helicobacter pylori (strain ATCC 700392 / 26695) (Campylobacter pylori)).